Here is a 229-residue protein sequence, read N- to C-terminus: Large ribosomal subunit protein uL1 (229 aa).

Belongs to the universal ribosomal protein uL1 family. As to quaternary structure, part of the 50S ribosomal subunit.

In terms of biological role, binds directly to 23S rRNA. The L1 stalk is quite mobile in the ribosome, and is involved in E site tRNA release. Functionally, protein L1 is also a translational repressor protein, it controls the translation of the L11 operon by binding to its mRNA. In Clostridium botulinum (strain Alaska E43 / Type E3), this protein is Large ribosomal subunit protein uL1.